A 366-amino-acid chain; its full sequence is MEDNLPVNVREYQELAKKALPKMAYDYINGGAEDEHTLRENIAAYTRIILRPRVLVDVSKIDMSTTLLGYTMRSPIIVAPTGGHKLAHPEGEKATARAAASCNAIMVLSFSSSCKIEDVASSCNAIRFYQLYVYKNRNVSATLVRRAESCGFKALLLTVDTPMLGRREADIRNKMVFPRSGNLEGLMTTDDHDTTNGSQLERFARATLDPSLSWKDIEWLKSITSMPIFLKGIVTAEDARRAVEAGVAGVIVSNHGARQLDYAPATIAALEEVVRAVAGAVPVLVDGGIRRGTDVFKALALGARAVMVGRPVFFGLAARGEAGARHVIEMLNGELEVAMALCGCRSVGEITRSHVMTEGDRIRSLL.

The 360-residue stretch at 1-360 (MEDNLPVNVR…TRSHVMTEGD (360 aa)) folds into the FMN hydroxy acid dehydrogenase domain. Residue tyrosine 27 coordinates a 2-oxocarboxylate. FMN is bound by residues 80–82 (PTG), serine 109, 130–132 (QLY), and threonine 158. Tyrosine 132 is an a 2-oxocarboxylate binding site. Arginine 167 provides a ligand contact to a 2-oxocarboxylate. FMN is bound by residues lysine 231 and serine 253. Histidine 255 functions as the Proton acceptor in the catalytic mechanism. A 2-oxocarboxylate is bound at residue arginine 258. Residues 286 to 290 (DGGIR) and 309 to 310 (GR) each bind FMN. The Microbody targeting signal motif lies at 364-366 (SLL).

This sequence belongs to the FMN-dependent alpha-hydroxy acid dehydrogenase family. As to quaternary structure, homotetramer. Binds to CATB and CATC; these interactions are disturbed by alpha-hydroxy-2-pyridinemethanesulfonic acid (HPMS) and salicylic acid (SA). FMN is required as a cofactor.

It localises to the peroxisome. It catalyses the reaction a (2S)-2-hydroxycarboxylate + O2 = a 2-oxocarboxylate + H2O2. The protein operates within lipid metabolism; fatty acid metabolism. Functionally, oxidase that catalyzes the oxidation of a broad range of 2-hydroxyacids to the corresponding 2-oxoacids, with a reduction of O2 to H2O2. May be involved in a general medium- and long-chain fatty acid catabolic pathway such as alpha-oxidation. The sequence is that of Peroxisomal (S)-2-hydroxy-acid oxidase GLO4 (GLO4) from Oryza sativa subsp. japonica (Rice).